The chain runs to 416 residues: TNF receptor-associated factor 1 (416 aa).

A disordered region spans residues 1–24 (MASSSGSSPRPAPDENEFPFGCPP). S146 bears the Phosphoserine mark. The stretch at 182–264 (MKEKLLAELE…QSLRLMEEAS (83 aa)) forms a coiled coil. Glycyl lysine isopeptide (Lys-Gly) (interchain with G-Cter in ubiquitin) cross-links involve residues K185 and K193. The 147-residue stretch at 266–412 (DGTFLWKITN…DDTMFLKCIV (147 aa)) folds into the MATH domain.

Homotrimer. Heterotrimer with TRAF2. Interacts with TNFRSF1A/TNFR1, TNFRSF1B/TNFR2, TNFRSF4, TNFRSF5/CD40, TNFRSF8/CD30, TNFRSF9/CD137, TNFRSF11A/RANK, TNFRSF13C, TNFRSF18/AITR, TNFRSF17/BCMA, TNFRSF19/TROY, TNFRSF19L/RELT, XEDAR, EDAR, Epstein-Barr virus BNFL1/LMP-1, TANK/ITRAF, TRAIP and RIPK2. Interacts with BIRC2 and BIRC3 N-terminus; a single BIRC2 or BIRC3 molecule interacts with a heterotrimer formed by TRAF1 and TRAF2. Interacts with NFATC2IP, TRAFD1 and with HIVEP3. Interacts with MAP3K14. Interacts with GPS2. Polyubiquitinated by BIRC2 and/or BIRC3, leading to its subsequent proteasomal degradation. Ubiquitinated by the SCF(FBXL2) complex, leading to its degradation by the proteasome.

Its function is as follows. Adapter molecule that regulates the activation of NF-kappa-B and JNK. Plays a role in the regulation of cell survival and apoptosis. The heterotrimer formed by TRAF1 and TRAF2 is part of a E3 ubiquitin-protein ligase complex that promotes ubiquitination of target proteins, such as MAP3K14. The TRAF1/TRAF2 complex recruits the antiapoptotic E3 protein-ubiquitin ligases BIRC2 and BIRC3 to TNFRSF1B/TNFR2. The chain is TNF receptor-associated factor 1 (TRAF1) from Homo sapiens (Human).